The following is a 309-amino-acid chain: NAD kinase (309 aa).

The active-site Proton acceptor is Asp89. NAD(+) contacts are provided by residues 89-90 (DG), 163-164 (NE), Arg191, Asp193, and 204-209 (TAYSLS).

The protein belongs to the NAD kinase family. The cofactor is a divalent metal cation.

Its subcellular location is the cytoplasm. The catalysed reaction is NAD(+) + ATP = ADP + NADP(+) + H(+). Involved in the regulation of the intracellular balance of NAD and NADP, and is a key enzyme in the biosynthesis of NADP. Catalyzes specifically the phosphorylation on 2'-hydroxyl of the adenosine moiety of NAD to yield NADP. The polypeptide is NAD kinase (Shewanella halifaxensis (strain HAW-EB4)).